The primary structure comprises 281 residues: Pantothenate synthetase (281 aa).

ATP is bound at residue 30–37 (MGNLHQGH). The active-site Proton donor is the H37. A (R)-pantoate-binding site is contributed by Q61. Q61 provides a ligand contact to beta-alanine. 149–152 (GNKD) provides a ligand contact to ATP. Q155 is a (R)-pantoate binding site. ATP is bound by residues I178 and 186 to 189 (MSSR).

This sequence belongs to the pantothenate synthetase family. In terms of assembly, homodimer.

Its subcellular location is the cytoplasm. It catalyses the reaction (R)-pantoate + beta-alanine + ATP = (R)-pantothenate + AMP + diphosphate + H(+). It functions in the pathway cofactor biosynthesis; (R)-pantothenate biosynthesis; (R)-pantothenate from (R)-pantoate and beta-alanine: step 1/1. Catalyzes the condensation of pantoate with beta-alanine in an ATP-dependent reaction via a pantoyl-adenylate intermediate. This chain is Pantothenate synthetase, found in Shewanella baltica (strain OS155 / ATCC BAA-1091).